We begin with the raw amino-acid sequence, 419 residues long: MINRFSIEKVKGLEIIDSRGNPTIRVFVRTNDGVESFGDAPAGASKGTREAIEVRDENGLTVKRAVDIANYIIDPALHGIDVREQGIIDKILIDIDSTENKSKLGGNTIIATSIAALKTASKALGLEVFKYIAGPRLPKIPIPLLNIINGGLHAGNKLKIQEFIVLPIKFNTFKEAFFAAIEVYRNLKGLISERYGKIYTAVGDEGGFSPPLEETREALDLIYTSINNAGYQGKIYMGMDAAASDFYDPKKEKYIIDGKELNPNQLLEFYLDLAKEYPIVYLEDPFEENSFDMFGELQNKLNSTIVTGDDLYTTNIKYLKIGIEKRSTKGVIVKPNQVGTISETFEFTNLARRNSIKLVTSHRSGETEDNFIAEFAVGIESDFIKTGAPARGERTSKYNKLLEIENKFGLEYGGKYFYL.

Gln-161 serves as a coordination point for (2R)-2-phosphoglycerate. The active-site Proton donor is Glu-205. Mg(2+)-binding residues include Asp-240, Glu-283, and Asp-309. 4 residues coordinate (2R)-2-phosphoglycerate: Lys-334, Arg-363, Ser-364, and Lys-385. Catalysis depends on Lys-334, which acts as the Proton acceptor.

This sequence belongs to the enolase family. The cofactor is Mg(2+).

It is found in the cytoplasm. The protein resides in the secreted. The protein localises to the cell surface. It carries out the reaction (2R)-2-phosphoglycerate = phosphoenolpyruvate + H2O. It functions in the pathway carbohydrate degradation; glycolysis; pyruvate from D-glyceraldehyde 3-phosphate: step 4/5. Its function is as follows. Catalyzes the reversible conversion of 2-phosphoglycerate (2-PG) into phosphoenolpyruvate (PEP). It is essential for the degradation of carbohydrates via glycolysis. This chain is Enolase, found in Saccharolobus islandicus (strain M.16.27) (Sulfolobus islandicus).